The chain runs to 450 residues: Tubulin beta-3 chain (450 aa).

The GTP site is built by Q11, E69, S138, G142, T143, G144, N204, and N226. E69 is a binding site for Mg(2+). Residues 420-450 (SEYQQYQDATADEEGDYEDEEEGEYQQEEEY) are disordered. A compositionally biased stretch (acidic residues) spans 429–450 (TADEEGDYEDEEEGEYQQEEEY).

Belongs to the tubulin family. As to quaternary structure, dimer of alpha and beta chains. A typical microtubule is a hollow water-filled tube with an outer diameter of 25 nm and an inner diameter of 15 nM. Alpha-beta heterodimers associate head-to-tail to form protofilaments running lengthwise along the microtubule wall with the beta-tubulin subunit facing the microtubule plus end conferring a structural polarity. Microtubules usually have 13 protofilaments but different protofilament numbers can be found in some organisms and specialized cells. Mg(2+) serves as cofactor.

Its subcellular location is the cytoplasm. It localises to the cytoskeleton. In terms of biological role, tubulin is the major constituent of microtubules, a cylinder consisting of laterally associated linear protofilaments composed of alpha- and beta-tubulin heterodimers. Microtubules grow by the addition of GTP-tubulin dimers to the microtubule end, where a stabilizing cap forms. Below the cap, tubulin dimers are in GDP-bound state, owing to GTPase activity of alpha-tubulin. The chain is Tubulin beta-3 chain (TUBB3) from Arabidopsis thaliana (Mouse-ear cress).